Consider the following 121-residue polypeptide: MAFDKDAIIASLKEASILDLADLVKAIEDEFGVSAAAPVAAAGAAGDDAAAKDSFDVELTEPGQAKIGVIKAVRDATGLGLKESKDLVDGAPSVIKKDLNESDANDLKSKLEAAGATVALK.

It belongs to the bacterial ribosomal protein bL12 family. As to quaternary structure, homodimer. Part of the ribosomal stalk of the 50S ribosomal subunit. Forms a multimeric L10(L12)X complex, where L10 forms an elongated spine to which 2 to 4 L12 dimers bind in a sequential fashion. Binds GTP-bound translation factors.

Its function is as follows. Forms part of the ribosomal stalk which helps the ribosome interact with GTP-bound translation factors. Is thus essential for accurate translation. The protein is Large ribosomal subunit protein bL12 of Oenococcus oeni (strain ATCC BAA-331 / PSU-1).